We begin with the raw amino-acid sequence, 487 residues long: Iron-sulfur cluster assembly SufBD family protein ycf24 (487 aa).

It belongs to the iron-sulfur cluster assembly SufBD family.

It is found in the plastid. It localises to the chloroplast. The chain is Iron-sulfur cluster assembly SufBD family protein ycf24 (ycf24) from Pyropia yezoensis (Susabi-nori).